The sequence spans 155 residues: Ribonuclease H (155 aa).

The RNase H type-1 domain maps to 1 to 142 (MLKQVEIFTD…CDELARAAAM (142 aa)). Mg(2+) is bound by residues Asp10, Glu48, Asp70, and Asp134.

The protein belongs to the RNase H family. In terms of assembly, monomer. Requires Mg(2+) as cofactor.

It localises to the cytoplasm. The enzyme catalyses Endonucleolytic cleavage to 5'-phosphomonoester.. Endonuclease that specifically degrades the RNA of RNA-DNA hybrids. In Citrobacter koseri (strain ATCC BAA-895 / CDC 4225-83 / SGSC4696), this protein is Ribonuclease H.